Consider the following 65-residue polypeptide: Small ribosomal subunit protein bS21 (65 aa).

Positions 43 to 65 (VDDRLKRARSKRRAQRANEESNA) are disordered. A compositionally biased stretch (basic residues) spans 48–57 (KRARSKRRAQ).

It belongs to the bacterial ribosomal protein bS21 family.

This is Small ribosomal subunit protein bS21 from Chloroherpeton thalassium (strain ATCC 35110 / GB-78).